The primary structure comprises 85 residues: Large ribosomal subunit protein bL27 (85 aa).

The interval 1-20 (MAHKKAGGSTRNGRDSEAKR) is disordered.

It belongs to the bacterial ribosomal protein bL27 family.

The sequence is that of Large ribosomal subunit protein bL27 from Klebsiella pneumoniae (strain 342).